Consider the following 180-residue polypeptide: Probable Brix domain-containing ribosomal biogenesis protein (180 aa).

One can recognise a Brix domain in the interval 1-178 (MTTSRRPSPR…KPAEMVKRGR (178 aa)).

Probably involved in the biogenesis of the ribosome. This chain is Probable Brix domain-containing ribosomal biogenesis protein, found in Aeropyrum pernix (strain ATCC 700893 / DSM 11879 / JCM 9820 / NBRC 100138 / K1).